The primary structure comprises 193 residues: dCTP deaminase (193 aa).

DCTP is bound by residues R110–R115, D128, V136–E138, Y171, K178, and Q182. Residue E138 is the Proton donor/acceptor of the active site. A disordered region spans residues Y171 to D193.

This sequence belongs to the dCTP deaminase family. Homotrimer.

The enzyme catalyses dCTP + H2O + H(+) = dUTP + NH4(+). The protein operates within pyrimidine metabolism; dUMP biosynthesis; dUMP from dCTP (dUTP route): step 1/2. In terms of biological role, catalyzes the deamination of dCTP to dUTP. The sequence is that of dCTP deaminase from Hamiltonella defensa subsp. Acyrthosiphon pisum (strain 5AT).